Consider the following 368-residue polypeptide: 3-dehydroquinate synthase (368 aa).

NAD(+)-binding positions include 76–81 (DGEQYK), 110–114 (GVIGD), 134–135 (TT), Lys147, Lys156, and 174–177 (CLKT). Residues Glu189, His252, and His269 each coordinate Zn(2+).

The protein belongs to the sugar phosphate cyclases superfamily. Dehydroquinate synthase family. NAD(+) serves as cofactor. It depends on Co(2+) as a cofactor. The cofactor is Zn(2+).

The protein localises to the cytoplasm. The catalysed reaction is 7-phospho-2-dehydro-3-deoxy-D-arabino-heptonate = 3-dehydroquinate + phosphate. Its pathway is metabolic intermediate biosynthesis; chorismate biosynthesis; chorismate from D-erythrose 4-phosphate and phosphoenolpyruvate: step 2/7. Its function is as follows. Catalyzes the conversion of 3-deoxy-D-arabino-heptulosonate 7-phosphate (DAHP) to dehydroquinate (DHQ). The protein is 3-dehydroquinate synthase of Vibrio vulnificus (strain YJ016).